Reading from the N-terminus, the 171-residue chain is Co-chaperone protein HscB homolog (171 aa).

Positions 2-74 constitute a J domain; it reads NHFELFGLPP…ISRAEYLLSQ (73 aa).

The protein belongs to the HscB family. In terms of assembly, interacts with HscA and stimulates its ATPase activity.

Co-chaperone involved in the maturation of iron-sulfur cluster-containing proteins. Seems to help targeting proteins to be folded toward HscA. This is Co-chaperone protein HscB homolog from Vibrio vulnificus (strain CMCP6).